A 77-amino-acid polypeptide reads, in one-letter code: Cytoplasmic envelopment protein 3 (77 aa).

The N-myristoyl glycine; by host moiety is linked to residue G2.

This sequence belongs to the herpesviridae cytoplasmic envelopment protein 3 family. In terms of assembly, interacts with cytoplasmic envelopment protein 2; this interaction is essential for the proper localization of each protein to the assembly complex and thus for the production of infectious virus. Myristoylation and palmitoylation (probably on one or more of the nearby cysteines at the N-terminus) enable membrane-binding and Golgi apparatus-specific targeting and are essential for efficient packaging. Post-translationally, phosphorylated. Phosphorylation does not seem to be required for recycling to the host Golgi apparatus. Packaging is selective for underphosphorylated forms.

It is found in the virion tegument. The protein localises to the virion membrane. Its subcellular location is the host cell membrane. It localises to the host Golgi apparatus membrane. Its function is as follows. Plays an important role in the cytoplasmic envelopment of tegument proteins and capsids during the assembly and egress processes. Also participates in viral entry at the fusion step probably by regulating the core fusion machinery. This Human herpesvirus 6A (strain Uganda-1102) (HHV-6 variant A) protein is Cytoplasmic envelopment protein 3 (U71).